Reading from the N-terminus, the 123-residue chain is Small ribosomal subunit protein uS12 (123 aa).

Residues 1 to 21 (MPTIEQLVRKGRQAKPKKSKT) are disordered. A compositionally biased stretch (basic residues) spans 9–20 (RKGRQAKPKKSK).

Belongs to the universal ribosomal protein uS12 family. As to quaternary structure, part of the 30S ribosomal subunit. Contacts proteins S8 and S17. May interact with IF1 in the 30S initiation complex.

In terms of biological role, with S4 and S5 plays an important role in translational accuracy. Its function is as follows. Interacts with and stabilizes bases of the 16S rRNA that are involved in tRNA selection in the A site and with the mRNA backbone. Located at the interface of the 30S and 50S subunits, it traverses the body of the 30S subunit contacting proteins on the other side and probably holding the rRNA structure together. The combined cluster of proteins S8, S12 and S17 appears to hold together the shoulder and platform of the 30S subunit. The sequence is that of Small ribosomal subunit protein uS12 from Bifidobacterium longum (strain NCC 2705).